The primary structure comprises 397 residues: uncharacterized protein (397 aa).

A run of 9 helical transmembrane segments spans residues 1 to 21 (MGAS…LMLV), 39 to 59 (VIQS…VVVF), 76 to 96 (EALS…FGVP), 103 to 123 (VLLF…FVGA), 124 to 144 (ALIE…LVMA), 194 to 214 (MMTP…LFAF), 219 to 239 (ALFG…FSLL), 255 to 275 (LVYL…KLML), and 301 to 321 (QSLT…FWSA).

It belongs to the TerC family.

Its subcellular location is the cell membrane. This is an uncharacterized protein from Mycobacterium tuberculosis (strain CDC 1551 / Oshkosh).